Consider the following 816-residue polypeptide: Phosphatidylinositol 4-kinase beta (816 aa).

Disordered regions lie at residues 1–30 (MGDT…GSLL), 101–120 (EDEM…RRRR), and 248–318 (AHRK…SFSS). Gly2 carries the post-translational modification N-acetylglycine. An interaction with ACBD3 region spans residues 2–68 (GDTIVEPAPL…VKLLHGGVAI (67 aa)). The PIK helical domain maps to 29–242 (LLSVITEGVG…GTKLRKLILS (214 aa)). Ser258 carries the post-translational modification Phosphoserine. Thr263 bears the Phosphothreonine mark. Phosphoserine is present on residues Ser266, Ser275, Ser277, Ser284, and Ser294. Composition is skewed to polar residues over residues 278–297 (DATA…SNPK) and 306–318 (SSST…SFSS). Position 428 is a phosphoserine (Ser428). Position 438 is a phosphothreonine (Thr438). Ser511 is modified (phosphoserine). 2 positions are modified to phosphothreonine: Thr517 and Thr519. A PI3K/PI4K catalytic domain is found at 535 to 801 (EPWQEKVRRI…MVDGSMRSIT (267 aa)). The segment at 541 to 547 (VRRIREG) is G-loop. Positions 668–676 (QVKDRHNGN) are catalytic loop. Positions 687 to 711 (HIDFGFILSSSPRNLGFETSAFKLT) are activation loop.

The protein belongs to the PI3/PI4-kinase family. Type III PI4K subfamily. In terms of assembly, interacts with ARF1 and ARF3 in the Golgi complex, but not with ARF4, ARF5 or ARF6. Interacts with NCS1/FREQ in a calcium-independent manner. Interacts with CALN1/CABP8 and CALN2/CABP7; in a calcium-dependent manner; this interaction competes with NCS1/FREQ binding. Interacts with ACBD3. Interacts with ARMH3, YWHAB, YWHAE, YWHAG, YWHAH, YWHAQ, YWHAZ and SFN. Interacts with GGA2 (via VHS domain); the interaction is important for PI4KB location at the Golgi apparatus membrane. Interacts with ATG9A. Requires Mg(2+) as cofactor. Mn(2+) serves as cofactor.

The protein resides in the endomembrane system. It is found in the mitochondrion outer membrane. It localises to the rough endoplasmic reticulum membrane. Its subcellular location is the golgi apparatus. The protein localises to the golgi apparatus membrane. It carries out the reaction a 1,2-diacyl-sn-glycero-3-phospho-(1D-myo-inositol) + ATP = a 1,2-diacyl-sn-glycero-3-phospho-(1D-myo-inositol 4-phosphate) + ADP + H(+). With respect to regulation, inhibited by wortmannin. Increased kinase activity upon interaction with NCS1/FREQ. Its function is as follows. Phosphorylates phosphatidylinositol (PI) in the first committed step in the production of the second messenger inositol-1,4,5,-trisphosphate (PIP). May regulate Golgi disintegration/reorganization during mitosis, possibly via its phosphorylation. Involved in Golgi-to-plasma membrane trafficking. In Bos taurus (Bovine), this protein is Phosphatidylinositol 4-kinase beta (PI4KB).